Here is a 556-residue protein sequence, read N- to C-terminus: Vetispiradiene synthase 1 (556 aa).

Residues D309, D313, D452, T456, and E460 each contribute to the Mg(2+) site. Positions 309 to 313 (DDTFD) match the DDXXD motif motif.

It belongs to the terpene synthase family. Tpsa subfamily. The cofactor is Mg(2+).

It is found in the cytoplasm. The catalysed reaction is (2E,6E)-farnesyl diphosphate = (-)-vetispiradiene + diphosphate. Its pathway is secondary metabolite biosynthesis; terpenoid biosynthesis. In terms of biological role, sesquiterpene synthase that catalyzes the formation of vetispiradiene from trans,trans-farnesyl diphosphate. The initial internal cyclization produces the monocyclic intermediate germacrene A. This is Vetispiradiene synthase 1 (PVS1) from Solanum tuberosum (Potato).